A 182-amino-acid polypeptide reads, in one-letter code: Dirigent protein 5 (182 aa).

Positions methionine 1–serine 23 are cleaved as a signal peptide. A disulfide bridge connects residues cysteine 35 and cysteine 181. N-linked (GlcNAc...) asparagine glycans are attached at residues asparagine 54 and asparagine 118.

This sequence belongs to the plant dirigent protein family. Homodimer. Confined to shoot meristem, vascular region of cotyledons and siliques abscission zone.

The protein localises to the secreted. It localises to the extracellular space. It is found in the apoplast. Its function is as follows. Dirigent proteins impart stereoselectivity on the phenoxy radical-coupling reaction, yielding optically active lignans from two molecules of coniferyl alcohol in the biosynthesis of lignans, flavonolignans, and alkaloids and thus plays a central role in plant secondary metabolism. Enantiocomplementary dirigent protein that mediates the laccase-catalyzed enantioselective oxidative phenol coupling of (E)-coniferyl alcohol to (-)-pinoresinol. The sequence is that of Dirigent protein 5 (DIR5) from Arabidopsis thaliana (Mouse-ear cress).